The following is a 299-amino-acid chain: Regucalcin (299 aa).

An a divalent metal cation-binding site is contributed by E18. Residues R101, N103, and E121 each coordinate substrate. K144 is modified (N6-succinyllysine). A divalent metal cation-binding residues include N154 and D204. Catalysis depends on D204, which acts as the Proton donor/acceptor. 2 positions are modified to N6-succinyllysine: K244 and K253. Position 268 is a phosphoserine (S268).

It belongs to the SMP-30/CGR1 family. Monomer. It depends on Zn(2+) as a cofactor. The cofactor is Mn(2+). Ca(2+) serves as cofactor. Requires Mg(2+) as cofactor. Co(2+) is required as a cofactor. The N-terminus is blocked. In terms of tissue distribution, detected in liver (at protein level). Hepatocytes and renal proximal tubular epithelium.

The protein resides in the cytoplasm. It catalyses the reaction D-glucono-1,5-lactone + H2O = D-gluconate + H(+). It participates in cofactor biosynthesis; L-ascorbate biosynthesis via UDP-alpha-D-glucuronate pathway; L-ascorbate from UDP-alpha-D-glucuronate: step 3/4. Its function is as follows. Gluconolactonase with low activity towards other sugar lactones, including gulonolactone and galactonolactone. Catalyzes a key step in ascorbic acid (vitamin C) biosynthesis. Can also hydrolyze diisopropyl phosphorofluoridate and phenylacetate (in vitro). Calcium-binding protein. Modulates Ca(2+) signaling, and Ca(2+)-dependent cellular processes and enzyme activities. The sequence is that of Regucalcin (Rgn) from Rattus norvegicus (Rat).